The following is a 385-amino-acid chain: MSPDTAADAAADPALQSSVLTVSLGERSYPIHIGPGLLGRAGALIAPLLRKPRVFVVTDATVAALHLDPLLASLGAAGIAHDHVVLPAGEATKSFSQLEELLDLLLAARFERSTTLLALGGGVIGDLVGFAAAILLRGVDFIQIPTTLLAQVDSSVGGKTGINTAYGKNLVGAFHQPRLVLADTTVLDTLPRRELLAGYGEVVKYGVIDDPAFFDWLEEHGSALIAGDGGARIHAVLTACRAKARVVAEDEREGGRRALLNLGHTFGHALEAETGFGPTLLHGEAVALGMVMALDLSVRLGLCPPADAARLRAHLDHVGLPTDPRRLEGAPAWNAERLLAAMDHDKKVEDGKVTFVLARGIGRSLLWREADTASVLATLRAAVAP.

Residues 122 to 126, 146 to 147, K159, and K168 contribute to the NAD(+) site; these read GVIGD and TT. The Zn(2+) site is built by E201, H264, and H282.

It belongs to the sugar phosphate cyclases superfamily. Dehydroquinate synthase family. Co(2+) is required as a cofactor. Zn(2+) serves as cofactor. It depends on NAD(+) as a cofactor.

Its subcellular location is the cytoplasm. It catalyses the reaction 7-phospho-2-dehydro-3-deoxy-D-arabino-heptonate = 3-dehydroquinate + phosphate. It participates in metabolic intermediate biosynthesis; chorismate biosynthesis; chorismate from D-erythrose 4-phosphate and phosphoenolpyruvate: step 2/7. Catalyzes the conversion of 3-deoxy-D-arabino-heptulosonate 7-phosphate (DAHP) to dehydroquinate (DHQ). The sequence is that of 3-dehydroquinate synthase from Rhodospirillum rubrum (strain ATCC 11170 / ATH 1.1.1 / DSM 467 / LMG 4362 / NCIMB 8255 / S1).